Consider the following 701-residue polypeptide: Polyribonucleotide nucleotidyltransferase (701 aa).

Mg(2+) is bound by residues Asp487 and Asp493. A KH domain is found at Pro553–Ile612. An S1 motif domain is found at Gly622–Lys692.

This sequence belongs to the polyribonucleotide nucleotidyltransferase family. The cofactor is Mg(2+).

The protein resides in the cytoplasm. The enzyme catalyses RNA(n+1) + phosphate = RNA(n) + a ribonucleoside 5'-diphosphate. Its function is as follows. Involved in mRNA degradation. Catalyzes the phosphorolysis of single-stranded polyribonucleotides processively in the 3'- to 5'-direction. This Laribacter hongkongensis (strain HLHK9) protein is Polyribonucleotide nucleotidyltransferase.